A 568-amino-acid polypeptide reads, in one-letter code: Urease subunit alpha (568 aa).

The Urease domain occupies 130–568 (GGIDTHIHFI…LPMAQRYFLF (439 aa)). Ni(2+) contacts are provided by histidine 135, histidine 137, and lysine 218. An N6-carboxylysine modification is found at lysine 218. Histidine 220 provides a ligand contact to substrate. Residues histidine 247 and histidine 273 each coordinate Ni(2+). The Proton donor role is filled by histidine 321. Aspartate 361 contacts Ni(2+).

It belongs to the metallo-dependent hydrolases superfamily. Urease alpha subunit family. Heterotrimer of UreA (gamma), UreB (beta) and UreC (alpha) subunits. Three heterotrimers associate to form the active enzyme. Requires Ni cation as cofactor. Post-translationally, carboxylation allows a single lysine to coordinate two nickel ions.

The protein localises to the cytoplasm. The catalysed reaction is urea + 2 H2O + H(+) = hydrogencarbonate + 2 NH4(+). Its pathway is nitrogen metabolism; urea degradation; CO(2) and NH(3) from urea (urease route): step 1/1. This chain is Urease subunit alpha, found in Burkholderia multivorans (strain ATCC 17616 / 249).